Reading from the N-terminus, the 607-residue chain is Phosphogluconate dehydratase (607 aa).

[4Fe-4S] cluster contacts are provided by Cys156 and Cys223.

The protein belongs to the IlvD/Edd family. The cofactor is [4Fe-4S] cluster.

It catalyses the reaction 6-phospho-D-gluconate = 2-dehydro-3-deoxy-6-phospho-D-gluconate + H2O. The protein operates within carbohydrate metabolism; Entner-Doudoroff pathway. Functionally, catalyzes the dehydration of 6-phospho-D-gluconate to 2-dehydro-3-deoxy-6-phospho-D-gluconate. The protein is Phosphogluconate dehydratase of Zymomonas mobilis subsp. mobilis (strain ATCC 31821 / ZM4 / CP4).